Reading from the N-terminus, the 354-residue chain is Rhodopsin (354 aa).

Residues 1 to 36 lie on the Extracellular side of the membrane; the sequence is MNGTEGPYFYVPMVNTTGIVRSPYEYPQYYLVSPAA. 2 N-linked (GlcNAc...) asparagine glycosylation sites follow: Asn-2 and Asn-15. A helical membrane pass occupies residues 37 to 61; that stretch reads YACLGAYMFFLILVGFPINFLTLYV. Over 62–73 the chain is Cytoplasmic; it reads TIEHKKLRTPLN. A helical transmembrane segment spans residues 74–96; the sequence is YILLNLAVADLFMVFGGFTTTIY. The Extracellular segment spans residues 97 to 110; the sequence is TSMHGYFVLGRLGC. Cys-110 and Cys-187 are disulfide-bonded. The helical transmembrane segment at 111 to 133 threads the bilayer; it reads NLEGYFATLGGEIGLWSLVVLAV. A 'Ionic lock' involved in activated form stabilization motif is present at residues 134 to 136; that stretch reads ERW. Residues 134–152 lie on the Cytoplasmic side of the membrane; it reads ERWLVVCKPISNFRFSENH. A helical transmembrane segment spans residues 153–173; sequence AIMGLVFTWIMANSCAAPPLL. Over 174 to 202 the chain is Extracellular; that stretch reads GWSRYIPEGMQCSCGVDYYTRAEGFNNES. A helical transmembrane segment spans residues 203–224; that stretch reads FVIYMFICHFCIPLIVVFFCYG. At 225–252 the chain is on the cytoplasmic side; sequence RLLCAVKEAAAAQQESETTQRAEREVTR. Residues 253-274 form a helical membrane-spanning segment; it reads MVVIMVIGFLVCWIPYASVAWY. The Extracellular segment spans residues 275-286; that stretch reads IFTHQGSEFGPL. Residues 287 to 308 traverse the membrane as a helical segment; it reads FMTVPAFFAKSASIYNPLIYIC. Lys-296 is modified (N6-(retinylidene)lysine). Residues 309–354 lie on the Cytoplasmic side of the membrane; sequence MNKQFRHCMITTLCCGKNPFEEEEGASTTASKTEASSVSSSSVSPA. Residues Cys-322 and Cys-323 are each lipidated (S-palmitoyl cysteine). Residues 333-354 form a disordered region; the sequence is GASTTASKTEASSVSSSSVSPA. Residues 334 to 354 show a composition bias toward low complexity; the sequence is ASTTASKTEASSVSSSSVSPA.

It belongs to the G-protein coupled receptor 1 family. Opsin subfamily. In terms of processing, phosphorylated on some or all of the serine and threonine residues present in the C-terminal region. Post-translationally, contains one covalently linked retinal chromophore.

The protein localises to the membrane. The protein resides in the cell projection. It localises to the cilium. Its subcellular location is the photoreceptor outer segment. Its function is as follows. Photoreceptor required for image-forming vision at low light intensity. While most salt water fish species use retinal as chromophore, most freshwater fish use 3-dehydroretinal, or a mixture of retinal and 3-dehydroretinal. Light-induced isomerization of 11-cis to all-trans retinal triggers a conformational change that activates signaling via G-proteins. Subsequent receptor phosphorylation mediates displacement of the bound G-protein alpha subunit by arrestin and terminates signaling. The sequence is that of Rhodopsin (rho) from Poecilia reticulata (Guppy).